Consider the following 309-residue polypeptide: Mitochondrial glycine transporter (309 aa).

3 Solcar repeats span residues 2–94, 124–207, and 219–304; these read SNVG…LRAL, LTSQ…IKHE, and QATL…GLML. Transmembrane regions (helical) follow at residues 8 to 33, 69 to 95, 130 to 155, 182 to 205, 223 to 249, and 279 to 297; these read LLSG…TRLQ, GTTP…RALM, LIAG…ARFE, GFLA…EGIK, IHGL…KTKI, and GASL…GWAV.

The protein belongs to the mitochondrial carrier (TC 2.A.29) family. SLC25A38 subfamily.

The protein resides in the mitochondrion inner membrane. The catalysed reaction is glycine(in) = glycine(out). In terms of biological role, mitochondrial glycine transporter that imports glycine into the mitochondrial matrix. Plays an important role in providing glycine for the first enzymatic step in heme biosynthesis, the condensation of glycine with succinyl-CoA to produce 5-aminolevulinate (ALA) in the mitochondrial matrix. The chain is Mitochondrial glycine transporter from Laccaria bicolor (strain S238N-H82 / ATCC MYA-4686) (Bicoloured deceiver).